A 280-amino-acid polypeptide reads, in one-letter code: uncharacterized protein (280 aa).

The N-terminal 51 residues, 1–51, are a transit peptide targeting the chloroplast; sequence MATSLLLRHSSAVFFSQSSFFTKNKSFRSFTSIKMEKGEAENAVKTKKVFV.

The protein belongs to the NAD(P)-dependent epimerase/dehydratase family.

The protein resides in the plastid. It localises to the chloroplast. It is found in the plastoglobule. This is an uncharacterized protein from Arabidopsis thaliana (Mouse-ear cress).